The primary structure comprises 818 residues: Rho GTPase-activating protein 44 (818 aa).

Residues 14–249 (QTVGRAEKTE…IKAQQEAWVE (236 aa)) enclose the BAR domain. The region spanning 255-445 (KPLEEHLTIS…PIIQHADWFF (191 aa)) is the Rho-GAP domain. Disordered stretches follow at residues 467–493 (ANYS…RPLS), 530–772 (SSAG…SMST), and 789–818 (TLRL…STAL). The span at 479-489 (PADRRQPEQAR) shows a compositional bias: basic and acidic residues. Serine 493 carries the post-translational modification Phosphoserine. Low complexity predominate over residues 563–579 (QPLDSPAAPALSPSGLG). Residues 598-611 (GSAQKGSPGSSQGT) show a composition bias toward polar residues. Composition is skewed to low complexity over residues 614–641 (AGTQ…DQSP) and 688–708 (SPYG…LSPA). The interaction with BST2 stretch occupies residues 731 to 818 (KPRQRPTLPP…SEEESESTAL (88 aa)). The segment covering 746–757 (VNLSASSPQSTE) has biased composition (polar residues). The short motif at 764 to 767 (MSPG) is the PDZ-binding element. A compositionally biased stretch (basic and acidic residues) spans 794–809 (PLEHMRRHSVTDKRDS). Residue serine 809 is modified to Phosphoserine. The short motif at 815 to 818 (STAL) is the PDZ-binding element.

Interacts with BST2 (via cytoplasmic domain). Interacts (probably via PDZ-binding motif) with SHANK3 (via PDZ domain); the interaction takes place in dendritic spines and promotes GRIA1 exocytosis. In terms of tissue distribution, highly expressed in brain. Expressed at weak level in other tissues.

The protein resides in the cell projection. The protein localises to the dendritic spine. It localises to the recycling endosome. Its subcellular location is the presynapse. It is found in the dendrite. Its function is as follows. GTPase-activating protein (GAP) that stimulates the GTPase activity of Rho-type GTPases. Thereby, controls Rho-type GTPases cycling between their active GTP-bound and inactive GDP-bound states. Acts as a GAP at least for CDC42 and RAC1. In neurons, is involved in dendritic spine formation and synaptic plasticity in a specific RAC1-GAP activity. Limits the initiation of exploratory dendritic filopodia. Recruited to actin-patches that seed filopodia, binds specifically to plasma membrane sections that are deformed inward by acto-myosin mediated contractile forces. Acts through GAP activity on RAC1 to reduce actin polymerization necessary for filopodia formation. In association with SHANK3, promotes GRIA1 exocytosis from recycling endosomes and spine morphological changes associated to long-term potentiation. The sequence is that of Rho GTPase-activating protein 44 from Homo sapiens (Human).